Here is a 422-residue protein sequence, read N- to C-terminus: UDP-N-acetylglucosamine 1-carboxyvinyltransferase (422 aa).

22-23 serves as a coordination point for phosphoenolpyruvate; the sequence is KN. Arg-93 provides a ligand contact to UDP-N-acetyl-alpha-D-glucosamine. Cys-117 (proton donor) is an active-site residue. A 2-(S-cysteinyl)pyruvic acid O-phosphothioketal modification is found at Cys-117. Residues 122–126, Asp-308, and Leu-330 contribute to the UDP-N-acetyl-alpha-D-glucosamine site; that span reads RPVDL.

Belongs to the EPSP synthase family. MurA subfamily.

It is found in the cytoplasm. It carries out the reaction phosphoenolpyruvate + UDP-N-acetyl-alpha-D-glucosamine = UDP-N-acetyl-3-O-(1-carboxyvinyl)-alpha-D-glucosamine + phosphate. The protein operates within cell wall biogenesis; peptidoglycan biosynthesis. In terms of biological role, cell wall formation. Adds enolpyruvyl to UDP-N-acetylglucosamine. This chain is UDP-N-acetylglucosamine 1-carboxyvinyltransferase, found in Helicobacter pylori (strain P12).